A 126-amino-acid chain; its full sequence is Large ribosomal subunit protein bL19 (126 aa).

The protein belongs to the bacterial ribosomal protein bL19 family.

In terms of biological role, this protein is located at the 30S-50S ribosomal subunit interface and may play a role in the structure and function of the aminoacyl-tRNA binding site. In Gluconacetobacter diazotrophicus (strain ATCC 49037 / DSM 5601 / CCUG 37298 / CIP 103539 / LMG 7603 / PAl5), this protein is Large ribosomal subunit protein bL19.